Consider the following 295-residue polypeptide: Probable dTDP-4,6-dihydroxy-2-methyloxan-3-one 4-ketoreductase (295 aa).

NADH is bound by residues 10–12 (GML), 36–37 (DV), 60–62 (AYT), Tyr-126, and Lys-130. NADPH contacts are provided by residues 11–12 (ML), 36–37 (DV), 60–62 (AYT), Tyr-126, and Lys-130. The active-site Proton donor/acceptor is Tyr-126.

This sequence belongs to the dTDP-4-dehydrorhamnose reductase family. Requires Mg(2+) as cofactor.

It functions in the pathway antibiotic biosynthesis. Involved in the biosynthesis of one of the two 2,6-deoxysugars, dTDP-L-oleandrose, attached to the macrolactone ring oleandolide to produce the aglycone antibiotic oleandomycin. Probably catalyzes the reduction of dTDP-4-keto-2,6-dideoxy-beta-L-galactose to yield dTDP-L-olivose. The polypeptide is Probable dTDP-4,6-dihydroxy-2-methyloxan-3-one 4-ketoreductase (Streptomyces antibioticus).